The following is a 349-amino-acid chain: DNA integrity scanning protein DisA (349 aa).

The region spanning 3–143 is the DAC domain; sequence KQDLMDIIVK…LKYRLKNFDE (141 aa). Residues Gly-70, Val-88, and 101–105 each bind ATP; that span reads TRHRT.

This sequence belongs to the DisA family. In terms of assembly, homooctamer. The cofactor is Mg(2+).

It carries out the reaction 2 ATP = 3',3'-c-di-AMP + 2 diphosphate. In terms of biological role, participates in a DNA-damage check-point. DisA forms globular foci that rapidly scan along the chromosomes searching for lesions. Its function is as follows. Also has diadenylate cyclase activity, catalyzing the condensation of 2 ATP molecules into cyclic di-AMP (c-di-AMP). c-di-AMP likely acts as a signaling molecule that may couple DNA integrity with a cellular process. The chain is DNA integrity scanning protein DisA from Fusobacterium nucleatum subsp. nucleatum (strain ATCC 25586 / DSM 15643 / BCRC 10681 / CIP 101130 / JCM 8532 / KCTC 2640 / LMG 13131 / VPI 4355).